The primary structure comprises 499 residues: Phenylalanine--tRNA ligase alpha subunit (499 aa).

L-phenylalanine is bound by residues Thr-330, 372 to 374 (QVE), and Tyr-412. Glu-414 contributes to the Mg(2+) binding site. Phe-438 contacts L-phenylalanine.

It belongs to the class-II aminoacyl-tRNA synthetase family. Phe-tRNA synthetase alpha subunit type 2 subfamily. As to quaternary structure, tetramer of two alpha and two beta subunits. Mg(2+) serves as cofactor.

It localises to the cytoplasm. It catalyses the reaction tRNA(Phe) + L-phenylalanine + ATP = L-phenylalanyl-tRNA(Phe) + AMP + diphosphate + H(+). The chain is Phenylalanine--tRNA ligase alpha subunit (frs2) from Schizosaccharomyces pombe (strain 972 / ATCC 24843) (Fission yeast).